We begin with the raw amino-acid sequence, 300 residues long: ATP-dependent (S)-NAD(P)H-hydrate dehydratase (300 aa).

Residues 14 to 293 (LLALFKTVVP…NQIPSVFQTE (280 aa)) enclose the YjeF C-terminal domain. Residues glycine 114 and 167–173 (NVMEFQR) contribute to the (6S)-NADPHX site. Residues 198-202 (KGAND) and 219-228 (GSGRRCGGQG) each bind ATP. Aspartate 229 contacts (6S)-NADPHX.

It belongs to the NnrD/CARKD family. Mg(2+) serves as cofactor.

The catalysed reaction is (6S)-NADHX + ATP = ADP + phosphate + NADH + H(+). It catalyses the reaction (6S)-NADPHX + ATP = ADP + phosphate + NADPH + H(+). Its function is as follows. Catalyzes the dehydration of the S-form of NAD(P)HX at the expense of ATP, which is converted to ADP. Together with NAD(P)HX epimerase, which catalyzes the epimerization of the S- and R-forms, the enzyme allows the repair of both epimers of NAD(P)HX, a damaged form of NAD(P)H that is a result of enzymatic or heat-dependent hydration. The chain is ATP-dependent (S)-NAD(P)H-hydrate dehydratase from Drosophila melanogaster (Fruit fly).